The chain runs to 149 residues: Large ribosomal subunit protein bL9 (149 aa).

It belongs to the bacterial ribosomal protein bL9 family.

Binds to the 23S rRNA. This chain is Large ribosomal subunit protein bL9, found in Citrobacter koseri (strain ATCC BAA-895 / CDC 4225-83 / SGSC4696).